The sequence spans 870 residues: Breast cancer anti-estrogen resistance protein 1 (870 aa).

An N-acetylmethionine modification is found at Met1. In terms of domain architecture, SH3 spans 3-65 (HLNVLAKALY…PGNRLKILVG (63 aa)). The disordered stretch occupies residues 70–156 (KPAGPGPGPP…TFSKQTPHHP (87 aa)). The span at 73–85 (GPGPGPPATPAQP) shows a compositional bias: pro residues. Over residues 97 to 111 (SQYTPMLPNTYQPQP) the composition is skewed to polar residues. Residues 115 to 416 (YLVPTPSKAQ…SGVYAVPPPA (302 aa)) form a substrate for kinases region. Phosphotyrosine; by SRC is present on Tyr128. Phosphoserine is present on residues Ser134 and Ser139. A compositionally biased stretch (polar residues) spans 135–151 (PQFQSPPAKQTSTFSKQ). The residue at position 234 (Tyr234) is a Phosphotyrosine. At Tyr249 the chain carries Phosphotyrosine; by ABL1. Thr269 bears the Phosphothreonine mark. Ser292 is subject to Phosphoserine. 3 positions are modified to phosphotyrosine: Tyr362, Tyr372, and Tyr410. 3 disordered regions span residues 411 to 449 (AVPPPAEREAPAEGKRLSASSTGSTRSSQSASSLEVAGP), 609 to 658 (KATA…NSEG), and 715 to 734 (IDHDLANWTPAQPLAPGRTG). Residues 416–426 (AEREAPAEGKR) are compositionally biased toward basic and acidic residues. A compositionally biased stretch (low complexity) spans 427–444 (LSASSTGSTRSSQSASSL). Phosphoserine is present on residues Ser428, Ser437, and Ser639. The segment covering 626 to 655 (TDKTSSIQSRPLPSPPKFTSQDSPDGQYEN) has biased composition (polar residues). An SH3-binding motif is present at residues 635-643 (RPLPSPPKF). Positions 746 to 796 (FYLEQCEANLTTLTNAVDAFFTAVATNQPPKIFVAHSKFVILSAHKLVFIG) are divergent helix-loop-helix motif.

The protein belongs to the CAS family. In terms of assembly, forms complexes in vivo with PTK2/FAK1, adapter protein CRKL and LYN kinase. Heterodimerizes with NEDD9. Component of a complex comprised of SH2D3C, BCAR1/CAS, and CRK. Within the complex, interacts with SH2D3C (via C-terminus), and CRK. Part of a complex comprised of PTPRA, BCAR1, BCAR3 (via SH2 domain) and SRC; the formation of the complex is dependent on integrin mediated-tyrosine phosphorylation of PTPRA. Interacts with BCAR3 (via Ras-GEF domain); the interaction regulates adhesion-dependent serine phosphorylation. Interacts with SMAD2 and SMAD3. Interacts with NPHP1. Interacts with PTK2B/PYK2. Interacts (via C-terminus) with SH2D3C/CHAT isoform 2 (via C-terminus). Interacts with activated CSPG4. Interacts with BMX, INPPL1/SHIP2 and PEAK1. Part of a collagen-stimulated complex involved in cell migration made of CDC42, CRK, TNK2 and BCAR1/p130cas. Interacts with TNK2 via SH3 domains. Interacts (when tyrosine-phosphorylated) with tensin TNS1; the interaction is increased by phosphorylation of TNS1. PTK2/FAK1 activation mediates phosphorylation at the YDYVHL motif; phosphorylation is most likely catalyzed by SRC family members. SRC-family kinases are recruited to the phosphorylated sites and can phosphorylate other tyrosine residues. Tyrosine phosphorylation is triggered by integrin-mediated adhesion of cells to the extracellular matrix. Post-translationally, dephosphorylated by PTPN14 at Tyr-128. In terms of processing, phosphorylated by SRC kinase in a EDN1- and PTK2B-mediated manner; phosphorylation strengthens its interaction with BCAR3 as part of the PTK2B/BCAR1/BCAR3/RAP1 signaling pathway. As to expression, expressed in B-cells (at protein level). Widely expressed with an abundant expression in the testis. Low level of expression seen in the liver, thymus, and peripheral blood leukocytes.

It localises to the cell junction. It is found in the focal adhesion. The protein localises to the cytoplasm. The protein resides in the cell projection. Its subcellular location is the axon. Functionally, docking protein which plays a central coordinating role for tyrosine kinase-based signaling related to cell adhesion. Implicated in induction of cell migration and cell branching. Involved in the BCAR3-mediated inhibition of TGFB signaling. This Homo sapiens (Human) protein is Breast cancer anti-estrogen resistance protein 1 (BCAR1).